Here is a 364-residue protein sequence, read N- to C-terminus: 3-isopropylmalate dehydrogenase (364 aa).

76-89 lines the NAD(+) pocket; the sequence is GPKWEKLPPNEQPE. Residues Arg97, Arg107, Arg136, and Asp225 each contribute to the substrate site. 3 residues coordinate Mg(2+): Asp225, Asp249, and Asp253. 283–295 provides a ligand contact to NAD(+); sequence GSAPDIAGKGIAN.

It belongs to the isocitrate and isopropylmalate dehydrogenases family. LeuB type 1 subfamily. In terms of assembly, homodimer. The cofactor is Mg(2+). It depends on Mn(2+) as a cofactor.

Its subcellular location is the cytoplasm. The catalysed reaction is (2R,3S)-3-isopropylmalate + NAD(+) = 4-methyl-2-oxopentanoate + CO2 + NADH. It functions in the pathway amino-acid biosynthesis; L-leucine biosynthesis; L-leucine from 3-methyl-2-oxobutanoate: step 3/4. Functionally, catalyzes the oxidation of 3-carboxy-2-hydroxy-4-methylpentanoate (3-isopropylmalate) to 3-carboxy-4-methyl-2-oxopentanoate. The product decarboxylates to 4-methyl-2 oxopentanoate. This Shewanella oneidensis (strain ATCC 700550 / JCM 31522 / CIP 106686 / LMG 19005 / NCIMB 14063 / MR-1) protein is 3-isopropylmalate dehydrogenase.